A 429-amino-acid chain; its full sequence is MSYSRSVYSSSSVVGGSPYRSLSSAPRFIPSSSAASVHAGAGGSGARISVSRVSSVGSGFGGGYSGVSNVNLIGGGQNEKETMQDLNDRLASYLERVRSLEAANKKLEVQIRQHTEKKGPSKDWSPYYKTIEDLRKQVFDSTLENSQLVLQIDNARLAADDFRVKYEAEMAIRMSVEGDITGLRKLIDDTNVSRMNLENEIESLKEELIFLKKNHQDDVTELQAQVARSAVTVEVDAPKSQDLGKIMTELRAQYDGLAQKNRDDVEKWYQSKVDEHTVQVNLDTEALHSAKSSVTDLRRTVQSLEIELESLRNQKASLEGTLHDTEARYAMELEMLGGTAMAMEAELVQVRSDCQRQQQEYQALLNTKMKLEAEIHTYRRLLEGDGSFDLQDAVPTVTTQTVKKVITTTQRIVDGKVVSESNDTEVLKS.

Positions 2–78 are head; that stretch reads SYSRSVYSSS…NVNLIGGGQN (77 aa). The segment at 79 to 114 is coil 1A; that stretch reads EKETMQDLNDRLASYLERVRSLEAANKKLEVQIRQH. An IF rod domain is found at 79–389; the sequence is EKETMQDLND…RLLEGDGSFD (311 aa). The linker 1 stretch occupies residues 115–130; sequence TEKKGPSKDWSPYYKT. Residues 131–222 form a coil 1B region; sequence IEDLRKQVFD…KNHQDDVTEL (92 aa). The linker 12 stretch occupies residues 223–246; sequence QAQVARSAVTVEVDAPKSQDLGKI. Residues 247–385 are coil 2; it reads MTELRAQYDG…HTYRRLLEGD (139 aa). The tract at residues 386-429 is tail; sequence GSFDLQDAVPTVTTQTVKKVITTTQRIVDGKVVSESNDTEVLKS.

It belongs to the intermediate filament family. Heterotetramer of two type I and two type II keratins. Keratin-18 associates with keratin-8. In terms of processing, phosphorylated. Proteolytically cleaved by caspases during epithelial cell apoptosis.

Functionally, when phosphorylated, plays a role in filament reorganization. The sequence is that of Keratin, type I cytoskeletal 18 from Xenopus tropicalis (Western clawed frog).